A 230-amino-acid polypeptide reads, in one-letter code: U2 small nuclear ribonucleoprotein A' (230 aa).

3 LRR repeats span residues 19–40 (KDRE…PFFP), 41–62 (RLRM…LANS), and 65–86 (GLTT…DPLR). Residues 99-137 (NPVTRKEYYRLWIIWRIPSVRFLDYQKVKDAERAKAAEL) enclose the LRRCT domain. The interval 211 to 230 (GRIPGGALDGAGNDGDQMQL) is disordered. A compositionally biased stretch (gly residues) spans 213 to 223 (IPGGALDGAGN).

It belongs to the U2 small nuclear ribonucleoprotein A family. As to quaternary structure, associated with the spliceosome.

The protein resides in the nucleus. In terms of biological role, involved in pre-mRNA splicing. The protein is U2 small nuclear ribonucleoprotein A' (lea1) of Emericella nidulans (strain FGSC A4 / ATCC 38163 / CBS 112.46 / NRRL 194 / M139) (Aspergillus nidulans).